The following is a 421-amino-acid chain: Subtilisin-like protease 2 (421 aa).

The first 16 residues, 1-16, serve as a signal peptide directing secretion; it reads MQLLNFGLLLLPFVAG. The propeptide occupies 17–122; sequence DLAPQPEPLL…VHPDQHVYLA (106 aa). An Inhibitor I9 domain is found at 36 to 122; the sequence is QYIVTLKEGL…VHPDQHVYLA (87 aa). The Peptidase S8 domain occupies 131-421; that stretch reads RWGLGYMSSK…ERKFTLPKYY (291 aa). Residues aspartate 169 and histidine 201 each act as charge relay system in the active site. 3 N-linked (GlcNAc...) asparagine glycosylation sites follow: asparagine 248, asparagine 261, and asparagine 348. The active-site Charge relay system is the serine 357. N-linked (GlcNAc...) asparagine glycosylation is present at asparagine 388.

The protein belongs to the peptidase S8 family.

It localises to the secreted. Its function is as follows. Secreted subtilisin-like serine protease with keratinolytic activity that contributes to pathogenicity. This Trichophyton verrucosum (strain HKI 0517) protein is Subtilisin-like protease 2 (SUB2).